Reading from the N-terminus, the 399-residue chain is Probable peptidoglycan glycosyltransferase FtsW (399 aa).

A run of 9 helical transmembrane segments spans residues Pro19–Ser39, Ile61–Trp81, Ser85–Gly105, Trp114–Ala134, Val160–Leu180, Phe198–Tyr218, Leu285–Ile305, Met314–Ile334, and Leu350–Ile370.

The protein belongs to the SEDS family. FtsW subfamily.

It localises to the cell inner membrane. The catalysed reaction is [GlcNAc-(1-&gt;4)-Mur2Ac(oyl-L-Ala-gamma-D-Glu-L-Lys-D-Ala-D-Ala)](n)-di-trans,octa-cis-undecaprenyl diphosphate + beta-D-GlcNAc-(1-&gt;4)-Mur2Ac(oyl-L-Ala-gamma-D-Glu-L-Lys-D-Ala-D-Ala)-di-trans,octa-cis-undecaprenyl diphosphate = [GlcNAc-(1-&gt;4)-Mur2Ac(oyl-L-Ala-gamma-D-Glu-L-Lys-D-Ala-D-Ala)](n+1)-di-trans,octa-cis-undecaprenyl diphosphate + di-trans,octa-cis-undecaprenyl diphosphate + H(+). It functions in the pathway cell wall biogenesis; peptidoglycan biosynthesis. In terms of biological role, peptidoglycan polymerase that is essential for cell division. The polypeptide is Probable peptidoglycan glycosyltransferase FtsW (Marinobacter nauticus (strain ATCC 700491 / DSM 11845 / VT8) (Marinobacter aquaeolei)).